We begin with the raw amino-acid sequence, 643 residues long: Threonine--tRNA ligase (643 aa).

Positions 1 to 61 (MPIITLPDGS…EQDATLEIIT (61 aa)) constitute a TGS domain. Positions 243–534 (DHRKIGKALD…ITEEYAGFFP (292 aa)) are catalytic. Zn(2+) is bound by residues Cys-334, His-385, and His-511.

The protein belongs to the class-II aminoacyl-tRNA synthetase family. As to quaternary structure, homodimer. Requires Zn(2+) as cofactor.

It is found in the cytoplasm. The enzyme catalyses tRNA(Thr) + L-threonine + ATP = L-threonyl-tRNA(Thr) + AMP + diphosphate + H(+). Functionally, catalyzes the attachment of threonine to tRNA(Thr) in a two-step reaction: L-threonine is first activated by ATP to form Thr-AMP and then transferred to the acceptor end of tRNA(Thr). Also edits incorrectly charged L-seryl-tRNA(Thr). This is Threonine--tRNA ligase from Haemophilus influenzae (strain 86-028NP).